The following is a 380-amino-acid chain: DNA replication and repair protein RecF (380 aa).

30–37 (GENAQGKT) contacts ATP.

Belongs to the RecF family.

The protein localises to the cytoplasm. Its function is as follows. The RecF protein is involved in DNA metabolism; it is required for DNA replication and normal SOS inducibility. RecF binds preferentially to single-stranded, linear DNA. It also seems to bind ATP. This is DNA replication and repair protein RecF from Synechococcus sp. (strain JA-3-3Ab) (Cyanobacteria bacterium Yellowstone A-Prime).